The chain runs to 184 residues: MNKGNLIKNYAVALLNNAMVDNIQDKIFEEITSINRIITDNFDIREFLFSPIVNKNDKINAVNLLAKNIKISTIVQNFLLLLVKNSRTAILSNIVNAYNTLLYESKNIKIVQVISANKLQPKEQEWIKSRIEKELNQKTEILFDIDNTIIGGIVIKYDSMLQDYSIKGSLEKIKKALKTVNIAV.

The protein belongs to the ATPase delta chain family. In terms of assembly, F-type ATPases have 2 components, F(1) - the catalytic core - and F(0) - the membrane proton channel. F(1) has five subunits: alpha(3), beta(3), gamma(1), delta(1), epsilon(1). F(0) has three main subunits: a(1), b(2) and c(10-14). The alpha and beta chains form an alternating ring which encloses part of the gamma chain. F(1) is attached to F(0) by a central stalk formed by the gamma and epsilon chains, while a peripheral stalk is formed by the delta and b chains.

The protein localises to the cell membrane. In terms of biological role, f(1)F(0) ATP synthase produces ATP from ADP in the presence of a proton or sodium gradient. F-type ATPases consist of two structural domains, F(1) containing the extramembraneous catalytic core and F(0) containing the membrane proton channel, linked together by a central stalk and a peripheral stalk. During catalysis, ATP synthesis in the catalytic domain of F(1) is coupled via a rotary mechanism of the central stalk subunits to proton translocation. This protein is part of the stalk that links CF(0) to CF(1). It either transmits conformational changes from CF(0) to CF(1) or is implicated in proton conduction. The sequence is that of ATP synthase subunit delta from Rickettsia africae (strain ESF-5).